The sequence spans 210 residues: Leucyl/phenylalanyl-tRNA--protein transferase (210 aa).

The protein belongs to the L/F-transferase family.

It localises to the cytoplasm. It catalyses the reaction N-terminal L-lysyl-[protein] + L-leucyl-tRNA(Leu) = N-terminal L-leucyl-L-lysyl-[protein] + tRNA(Leu) + H(+). The enzyme catalyses N-terminal L-arginyl-[protein] + L-leucyl-tRNA(Leu) = N-terminal L-leucyl-L-arginyl-[protein] + tRNA(Leu) + H(+). The catalysed reaction is L-phenylalanyl-tRNA(Phe) + an N-terminal L-alpha-aminoacyl-[protein] = an N-terminal L-phenylalanyl-L-alpha-aminoacyl-[protein] + tRNA(Phe). Functionally, functions in the N-end rule pathway of protein degradation where it conjugates Leu, Phe and, less efficiently, Met from aminoacyl-tRNAs to the N-termini of proteins containing an N-terminal arginine or lysine. This Ruegeria sp. (strain TM1040) (Silicibacter sp.) protein is Leucyl/phenylalanyl-tRNA--protein transferase.